The following is a 201-amino-acid chain: MGKLSILSKRKYTMKNQIQFSTFNFKDLPVRVILDPKGEFWFCGTDVCHILGYTNSRKALQDHCKQGGVTKRYTPTKSADQEMTFINEPNLYRLIIKSRKPEAEPFEAWVFEEVLPQIRKTGKYQLQPQQLALPEPEKKFSFEFTEYELQQLVWLWFAFMRGIVTFQHIEKAFKALGSNMSGDIYGQAYEYLSVYAQQTKS.

The Bro-N domain maps to 15-122 (KNQIQFSTFN…EVLPQIRKTG (108 aa)).

This is an uncharacterized protein from Haemophilus influenzae (strain ATCC 51907 / DSM 11121 / KW20 / Rd).